A 338-amino-acid polypeptide reads, in one-letter code: uncharacterized protein (338 aa).

This is an uncharacterized protein from Acanthamoeba polyphaga (Amoeba).